Here is a 91-residue protein sequence, read N- to C-terminus: Small ribosomal subunit protein bS16 (91 aa).

This sequence belongs to the bacterial ribosomal protein bS16 family.

This is Small ribosomal subunit protein bS16 from Levilactobacillus brevis (strain ATCC 367 / BCRC 12310 / CIP 105137 / JCM 1170 / LMG 11437 / NCIMB 947 / NCTC 947) (Lactobacillus brevis).